An 808-amino-acid polypeptide reads, in one-letter code: Receptor like protein 27 (808 aa).

The N-terminal stretch at 1 to 31 (MLFFIKVFMKTILSVLLLFFIFASSFTLVVG) is a signal peptide. The Extracellular segment spans residues 32-740 (LAGCRPDQIQ…DEDEEVLNWK (709 aa)). Residues asparagine 56, asparagine 68, asparagine 90, asparagine 103, asparagine 108, asparagine 144, and asparagine 167 are each glycosylated (N-linked (GlcNAc...) asparagine). LRR repeat units follow at residues 96 to 120 (LQHL…GFGN), 122 to 144 (NRLE…SFSN), 145 to 170 (LSQL…NLTK), 172 to 192 (SILV…LLTL), 193 to 218 (PFLS…STSS), 220 to 241 (LEFM…ISKL), 242 to 265 (INLK…LFSS), 266 to 291 (FKSL…SKIP), 293 to 314 (NLEN…LKNL), 315 to 338 (TKLE…FWNL), 340 to 363 (RLRR…VLVN), and 364 to 387 (SSVR…PLSI). Asparagine 213 carries an N-linked (GlcNAc...) asparagine glycan. N-linked (GlcNAc...) asparagine glycosylation is present at asparagine 313. An N-linked (GlcNAc...) asparagine glycan is attached at asparagine 363. The LRR 13; degenerate repeat unit spans residues 388-407 (NLLSAWNNSFTGNIPLETCN). Asparagine 394, asparagine 407, and asparagine 420 each carry an N-linked (GlcNAc...) asparagine glycan. LRR repeat units follow at residues 408-434 (RSSL…DFQE), 436-456 (LIVV…IFSD), 457-481 (GALL…LLNC), 483-504 (MLRF…WLKA), 505-529 (LPDL…DRGP), 532-556 (FPKL…YFVN), 601-625 (LTSY…IGLL), 626-649 (KALI…LANV), 650-673 (TELE…LKTL), and 675-698 (FLAY…QITG). Asparagine 480 carries N-linked (GlcNAc...) asparagine glycosylation. The N-linked (GlcNAc...) asparagine glycan is linked to asparagine 544. N-linked (GlcNAc...) asparagine glycosylation is found at asparagine 632 and asparagine 648. A helical membrane pass occupies residues 741-761 (AVVIGYWPGLLLGLIMAHVIA). At 762 to 808 (SFKPKWLVKIVGPEKRKEDNPVRLFMTLDSRWDSFNNKKNVEQKSDM) the chain is on the cytoplasmic side.

This sequence belongs to the RLP family.

It localises to the cell membrane. This Arabidopsis thaliana (Mouse-ear cress) protein is Receptor like protein 27.